The primary structure comprises 155 residues: Small ribosomal subunit protein uS7 (155 aa).

It belongs to the universal ribosomal protein uS7 family. As to quaternary structure, part of the 30S ribosomal subunit. Contacts proteins S9 and S11.

Its function is as follows. One of the primary rRNA binding proteins, it binds directly to 16S rRNA where it nucleates assembly of the head domain of the 30S subunit. Is located at the subunit interface close to the decoding center, probably blocks exit of the E-site tRNA. The chain is Small ribosomal subunit protein uS7 from Ureaplasma parvum serovar 3 (strain ATCC 27815 / 27 / NCTC 11736).